A 308-amino-acid polypeptide reads, in one-letter code: 15-cis-phytoene synthase (308 aa).

Belongs to the phytoene/squalene synthase family. The cofactor is ATP. It depends on Mn(2+) as a cofactor. Mg(2+) is required as a cofactor.

It carries out the reaction 2 (2E,6E,10E)-geranylgeranyl diphosphate = 15-cis-phytoene + 2 diphosphate. It participates in carotenoid biosynthesis; phytoene biosynthesis. Functionally, involved in the biosynthesis of carotenoids. Catalyzes the condensation of two molecules of geranylgeranyl diphosphate (GGPP) to give prephytoene diphosphate (PPPP) and the subsequent rearrangement of the cyclopropylcarbinyl intermediate to yield 15-cis-phytoene. This chain is 15-cis-phytoene synthase (crtB), found in Synechococcus elongatus (strain ATCC 33912 / PCC 7942 / FACHB-805) (Anacystis nidulans R2).